The primary structure comprises 505 residues: Protein phosphatase 1J (505 aa).

The tract at residues 1-103 (MLNRVRSAVA…PPDTGRRLPW (103 aa)) is disordered. The span at 27–50 (DLPNAASAPPAAAPEAPRSPPAKA) shows a compositional bias: low complexity. Residues Ser-66 and Ser-76 each carry the phosphoserine modification. The PPM-type phosphatase domain occupies 104-498 (STGYAEVINA…DDISVFVIPL (395 aa)).

The protein belongs to the PP2C family. Interacts with UBE2I/UBC9.

The enzyme catalyses O-phospho-L-seryl-[protein] + H2O = L-seryl-[protein] + phosphate. It carries out the reaction O-phospho-L-threonyl-[protein] + H2O = L-threonyl-[protein] + phosphate. The polypeptide is Protein phosphatase 1J (PPM1J) (Homo sapiens (Human)).